Here is a 239-residue protein sequence, read N- to C-terminus: Ribonuclease PH (239 aa).

Residues Arg-86 and 124-126 (GTR) contribute to the phosphate site.

This sequence belongs to the RNase PH family. Homohexameric ring arranged as a trimer of dimers.

It catalyses the reaction tRNA(n+1) + phosphate = tRNA(n) + a ribonucleoside 5'-diphosphate. Its function is as follows. Phosphorolytic 3'-5' exoribonuclease that plays an important role in tRNA 3'-end maturation. Removes nucleotide residues following the 3'-CCA terminus of tRNAs; can also add nucleotides to the ends of RNA molecules by using nucleoside diphosphates as substrates, but this may not be physiologically important. Probably plays a role in initiation of 16S rRNA degradation (leading to ribosome degradation) during starvation. The sequence is that of Ribonuclease PH from Cupriavidus necator (strain ATCC 17699 / DSM 428 / KCTC 22496 / NCIMB 10442 / H16 / Stanier 337) (Ralstonia eutropha).